Here is a 263-residue protein sequence, read N- to C-terminus: Putative SNAP25 homologous protein SNAP30 (263 aa).

Disordered stretches follow at residues 1 to 61 and 132 to 209; these read MFGF…LQSQ and NLGG…DGLS. Polar residues-rich tracts occupy residues 8–34 and 52–61; these read PGNN…TSSE and FNDSGGLQSQ. Basic and acidic residues predominate over residues 158–173; sequence KPSKKSENHKEEREKL. The span at 180 to 194 shows a compositional bias: polar residues; it reads RSSSQPALDQPTNAL. Basic and acidic residues predominate over residues 197 to 206; sequence VEQEKAKQDD. A t-SNARE coiled-coil homology domain is found at 198–260; that stretch reads EQEKAKQDDG…QGANQRARHL (63 aa).

This sequence belongs to the SNAP-25 family.

Its subcellular location is the membrane. It is found in the cytoplasm. Functionally, vesicle trafficking protein that functions in the secretory pathway. This is Putative SNAP25 homologous protein SNAP30 (SNAP30) from Arabidopsis thaliana (Mouse-ear cress).